Here is a 504-residue protein sequence, read N- to C-terminus: Kinesin light chain 3 (504 aa).

Residues 90–150 (ALSAHVGALE…EEEKRHLEFL (61 aa)) are a coiled coil. Residues 153-197 (LRQYDPPAESQQSESPPRRDSLASLFPSEEEERKGPEAAGAAAAQ) form a disordered region. A compositionally biased stretch (low complexity) spans 158-167 (PPAESQQSES). Position 173 is a phosphoserine (S173). TPR repeat units follow at residues 207–240 (LRTLHNLVIQYAGQGRYEVAVPLCRQALEDLERS), 249–282 (ATMLNILALVYRDQNKYKEATDLLHDALQIREQT), 291–324 (AATLNNLAVLYGKRGRYREAEPLCQRALEIREKV), 333–366 (AKQLNNLALLCQNQGKFEDVERHYARALSIYEAL), and 375–408 (AKTKNNLASAYLKQNKYQQAEELYKEILHKEDLP). The segment at 411–438 (LGAPNTGTAGDAEQALRRSSSLSKIRES) is disordered. Position 466 is a phosphoserine (S466). At T498 the chain carries Phosphothreonine. The residue at position 502 (S502) is a Phosphoserine.

The protein belongs to the kinesin light chain family. Oligomer composed of two heavy chains and two light chains. Associates with microtubulin in an ATP-dependent manner. Interacts with KIF5C. Interacts with ODF1. Interacts with LRGUK. Interacts with VDAC2.

The protein resides in the cytoplasm. It localises to the cytoskeleton. It is found in the mitochondrion. In terms of biological role, kinesin is a microtubule-associated force-producing protein that may play a role in organelle transport. Plays a role during spermiogenesis in the development of the sperm tail midpiece and in the normal function of spermatozoa. May play a role in the formation of the mitochondrial sheath formation in the developing spermatid midpiece. The polypeptide is Kinesin light chain 3 (KLC3) (Pongo abelii (Sumatran orangutan)).